A 1166-amino-acid polypeptide reads, in one-letter code: MSGRRCAGGGAACASAAAEAVEPAARELFEACRNGDVERVKRLVTPEKVNSRDTAGRKSTPLHFAAGFGRKDVVEYLLQNGANVQARDDGGLIPLHNACSFGHAEVVNLLLRHGADPNARDNWNYTPLHEAAIKGKIDVCIVLLQHGAEPTIRNTDGRTALDLADPSAKAVLTGEYKKDELLESARSGNEEKMMALLTPLNVNCHASDGRKSTPLHLAAGYNRVKIVQLLLQHGADVHAKDKGDLVPLHNACSYGHYEVTELLVKHGACVNAMDLWQFTPLHEAASKNRVEVCSLLLSYGADPTLLNCHNKSAIDLAPTPQLKERLAYEFKGHSLLQAAREADVTRIKKHLSLEMVNFKHPQTHETALHCAAASPYPKRKQICELLLRKGANINEKTKEFLTPLHVASEKAHNDVVEVVVKHEAKVNALDNLGQTSLHRAAYCGHLQTCRLLLSYGCDPNIISLQGFTALQMGNENVQQLLQEGISLGNSEADRQLLEAAKAGDVETVKKLCTVQSVNCRDIEGRQSTPLHFAAGYNRVSVVEYLLQHGADVHAKDKGGLVPLHNACSYGHYEVAELLVKHGAVVNVADLWKFTPLHEAAAKGKYEICKLLLQHGADPTKKNRDGNTPLDLVKDGDTDIQDLLRGDAALLDAAKKGCLARVKKLSSPDNVNCRDTQGRHSTPLHLAAGYNNLEVAEYLLQHGADVNAQDKGGLIPLHNAASYGHVDVAALLIKYNACVNATDKWAFTPLHEAAQKGRTQLCALLLAHGADPTLKNQEGQTPLDLVSADDVSALLTAAMPPSALPSCYKPQVLNGVRSPGATADALSSGPSSPSSLSAASSLDNLSGSFSELSSVVSSSGTEGASSLEKKEVPGVDFSITQFVRNLGLEHLMDIFEREQITLDVLVEMGHKELKEIGINAYGHRHKLIKGVERLISGQQGLNPYLTLNTSGSGTILIDLSPDDKEFQSVEEEMQSTVREHRDGGHAGGIFNRYNILKIQKVCNKKLWERYTHRRKEVSEENHNHANERMLFHGSPFVNAIIHKGFDERHAYIGGMFGAGIYFAENSSKSNQYVYGIGGGTGCPVHKDRSCYICHRQLLFCRVTLGKSFLQFSAMKMAHSPPGHHSVTGRPSVNGLALAEYVIYRGEQAYPEYLITYQIMRPEGMVDG.

3 ANK repeats span residues 57-89, 90-122, and 123-155; these read RKSTPLHFAAGFGRKDVVEYLLQNGANVQARDD, GGLIPLHNACSFGHAEVVNLLLRHGADPNARDN, and WNYTPLHEAAIKGKIDVCIVLLQHGAEPTIRNT. N203 is modified ((3S)-3-hydroxyasparagine; by HIF1AN; partial). ANK repeat units follow at residues 210–242, 243–275, 276–308, 363–398, 399–431, and 432–464; these read RKSTPLHLAAGYNRVKIVQLLLQHGADVHAKDK, GDLVPLHNACSYGHYEVTELLVKHGACVNAMDL, WQFTPLHEAASKNRVEVCSLLLSYGADPTLLNC, THETALHCAAASPYPKRKQICELLLRKGANINEKTK, EFLTPLHVASEKAHNDVVEVVVKHEAKVNALDN, and LGQTSLHRAAYCGHLQTCRLLLSYGCDPNIISL. H238 carries the post-translational modification (3S)-3-hydroxyhistidine; by HIF1AN; partial. N271 carries the (3S)-3-hydroxyasparagine; by HIF1AN; partial modification. Residue N427 is modified to (3S)-3-hydroxyasparagine; by HIF1AN; partial. At N518 the chain carries (3S)-3-hydroxyasparagine; by HIF1AN; partial. ANK repeat units follow at residues 525–557, 558–590, and 591–623; these read RQSTPLHFAAGYNRVSVVEYLLQHGADVHAKDK, GGLVPLHNACSYGHYEVAELLVKHGAVVNVADL, and WKFTPLHEAAAKGKYEICKLLLQHGADPTKKNR. Positions 545–553 are HIF1AN-binding; that stretch reads LLQHGADVH. Position 553 is a (3S)-3-hydroxyhistidine; by HIF1AN; partial (H553). Residue N586 is modified to (3S)-3-hydroxyasparagine; by HIF1AN; partial. N671, N706, and N739 each carry (3S)-3-hydroxyasparagine; by HIF1AN; partial. ANK repeat units lie at residues 678–710, 711–743, and 744–776; these read RHSTPLHLAAGYNNLEVAEYLLQHGADVNAQDK, GGLIPLHNAASYGHVDVAALLIKYNACVNATDK, and WAFTPLHEAAQKGRTQLCALLLAHGADPTLKNQ. The tract at residues 819-839 is disordered; sequence GATADALSSGPSSPSSLSAAS. A compositionally biased stretch (low complexity) spans 822–839; that stretch reads ADALSSGPSSPSSLSAAS. In terms of domain architecture, SAM spans 873–936; it reads GVDFSITQFV…IKGVERLISG (64 aa). Positions 959 to 1164 constitute a PARP catalytic domain; it reads SPDDKEFQSV…YQIMRPEGMV (206 aa). Zn(2+) contacts are provided by C1081, H1084, C1089, and C1092.

The protein belongs to the ARTD/PARP family. In terms of assembly, oligomerizes and associates with TNKS. Interacts with the cytoplasmic domain of LNPEP/Otase in SLC2A4/GLUT4-vesicles. Binds to the N-terminus of Grb14 and TRF1 with its ankyrin repeat region. Interacts with HIF1AN. Interacts with RNF146; this interaction leads to ubiquitination and proteasomal degradation. Interacts with NUMA1. In terms of processing, ubiquitinated at 'Lys-48' and 'Lys-63' by RNF146 when auto-poly-ADP-ribosylated; this leads to degradation. Deubiquitinated by USP25; leading to stabilization. Post-translationally, ADP-ribosylated (-auto). Poly-ADP-ribosylated protein is recognized by RNF146, followed by ubiquitination. The crystallographic evidence suggests that the 3-hydroxyhistidine may be the (3S) stereoisomer. In terms of tissue distribution, highly expressed in placenta, skeletal muscle, liver, brain, kidney, heart, thymus, spinal cord, lung, peripheral blood leukocytes, pancreas, lymph nodes, spleen, prostate, testis, ovary, small intestine, colon, mammary gland, breast and breast carcinoma, and in common-type meningioma. Highly expressed in fetal liver, heart and brain.

Its subcellular location is the cytoplasm. The protein resides in the golgi apparatus membrane. It is found in the nucleus. The protein localises to the chromosome. It localises to the telomere. The catalysed reaction is NAD(+) + (ADP-D-ribosyl)n-acceptor = nicotinamide + (ADP-D-ribosyl)n+1-acceptor + H(+).. It carries out the reaction L-aspartyl-[protein] + NAD(+) = 4-O-(ADP-D-ribosyl)-L-aspartyl-[protein] + nicotinamide. It catalyses the reaction L-glutamyl-[protein] + NAD(+) = 5-O-(ADP-D-ribosyl)-L-glutamyl-[protein] + nicotinamide. With respect to regulation, specifically inhibited by XAV939, a small molecule, leading to inhibit the Wnt signaling pathway by stabilizing AXIN1 and AXIN2. Inhibited by talazoparib. In terms of biological role, poly-ADP-ribosyltransferase involved in various processes such as Wnt signaling pathway, telomere length and vesicle trafficking. Acts as an activator of the Wnt signaling pathway by mediating poly-ADP-ribosylation of AXIN1 and AXIN2, 2 key components of the beta-catenin destruction complex: poly-ADP-ribosylated target proteins are recognized by RNF146, which mediates their ubiquitination and subsequent degradation. Also mediates poly-ADP-ribosylation of BLZF1 and CASC3, followed by recruitment of RNF146 and subsequent ubiquitination. Mediates poly-ADP-ribosylation of TERF1, thereby contributing to the regulation of telomere length. Stimulates 26S proteasome activity. This is Poly [ADP-ribose] polymerase tankyrase-2 from Homo sapiens (Human).